The sequence spans 357 residues: UDP-N-acetylglucosamine--N-acetylmuramyl-(pentapeptide) pyrophosphoryl-undecaprenol N-acetylglucosamine transferase (357 aa).

UDP-N-acetyl-alpha-D-glucosamine-binding positions include 13–15 (SAG), Arg166, Ser196, and Gln291.

This sequence belongs to the glycosyltransferase 28 family. MurG subfamily.

Its subcellular location is the cell membrane. It carries out the reaction di-trans,octa-cis-undecaprenyl diphospho-N-acetyl-alpha-D-muramoyl-L-alanyl-D-glutamyl-meso-2,6-diaminopimeloyl-D-alanyl-D-alanine + UDP-N-acetyl-alpha-D-glucosamine = di-trans,octa-cis-undecaprenyl diphospho-[N-acetyl-alpha-D-glucosaminyl-(1-&gt;4)]-N-acetyl-alpha-D-muramoyl-L-alanyl-D-glutamyl-meso-2,6-diaminopimeloyl-D-alanyl-D-alanine + UDP + H(+). It participates in cell wall biogenesis; peptidoglycan biosynthesis. Functionally, cell wall formation. Catalyzes the transfer of a GlcNAc subunit on undecaprenyl-pyrophosphoryl-MurNAc-pentapeptide (lipid intermediate I) to form undecaprenyl-pyrophosphoryl-MurNAc-(pentapeptide)GlcNAc (lipid intermediate II). This is UDP-N-acetylglucosamine--N-acetylmuramyl-(pentapeptide) pyrophosphoryl-undecaprenol N-acetylglucosamine transferase from Clostridium perfringens (strain SM101 / Type A).